The sequence spans 348 residues: NADH-quinone oxidoreductase subunit H (348 aa).

The next 8 membrane-spanning stretches (helical) occupy residues 10–30 (LPLFIVVGKTLLLLTVLLVLI), 82–102 (GVFLLAPFVSATLALSAWAVV), 115–135 (VGLLYILAISSLEVYGVIMGG), 161–181 (IGFVLVTVILVSGSLDLTTIV), 199–219 (LLDWNWLILFPMFIIFFISAL), 251–271 (LFFLGEYVAIVLMCALTTILF), 287–307 (VPGVIWFVLKVCFVFFWFAMV), and 322–342 (LGWKVFLPISLAMVVITAAIL).

The protein belongs to the complex I subunit 1 family. As to quaternary structure, NDH-1 is composed of 14 different subunits. Subunits NuoA, H, J, K, L, M, N constitute the membrane sector of the complex.

Its subcellular location is the cell inner membrane. The enzyme catalyses a quinone + NADH + 5 H(+)(in) = a quinol + NAD(+) + 4 H(+)(out). In terms of biological role, NDH-1 shuttles electrons from NADH, via FMN and iron-sulfur (Fe-S) centers, to quinones in the respiratory chain. The immediate electron acceptor for the enzyme in this species is believed to be ubiquinone. Couples the redox reaction to proton translocation (for every two electrons transferred, four hydrogen ions are translocated across the cytoplasmic membrane), and thus conserves the redox energy in a proton gradient. This subunit may bind ubiquinone. The protein is NADH-quinone oxidoreductase subunit H of Bartonella bacilliformis (strain ATCC 35685 / KC583 / Herrer 020/F12,63).